Consider the following 244-residue polypeptide: 14-3-3 protein beta/alpha-A (244 aa).

M1 carries the N-acetylmethionine modification.

It belongs to the 14-3-3 family. As to quaternary structure, homodimer, and heterodimer with other family members.

The protein localises to the cytoplasm. Its function is as follows. Adapter protein implicated in the regulation of a large spectrum of both general and specialized signaling pathways. Binds to a large number of partners, usually by recognition of a phosphoserine or phosphothreonine motif. Binding generally results in the modulation of the activity of the binding partner. The protein is 14-3-3 protein beta/alpha-A (ywhab-a) of Xenopus laevis (African clawed frog).